Reading from the N-terminus, the 475-residue chain is Glutamyl-tRNA(Gln) amidotransferase subunit A (475 aa).

Catalysis depends on charge relay system residues lysine 69 and serine 144. The active-site Acyl-ester intermediate is serine 168.

Belongs to the amidase family. GatA subfamily. As to quaternary structure, heterotrimer of A, B and C subunits.

It carries out the reaction L-glutamyl-tRNA(Gln) + L-glutamine + ATP + H2O = L-glutaminyl-tRNA(Gln) + L-glutamate + ADP + phosphate + H(+). In terms of biological role, allows the formation of correctly charged Gln-tRNA(Gln) through the transamidation of misacylated Glu-tRNA(Gln) in organisms which lack glutaminyl-tRNA synthetase. The reaction takes place in the presence of glutamine and ATP through an activated gamma-phospho-Glu-tRNA(Gln). This Methanosarcina barkeri (strain Fusaro / DSM 804) protein is Glutamyl-tRNA(Gln) amidotransferase subunit A.